The chain runs to 168 residues: Coiled-coil domain-containing protein 200 (168 aa).

A coiled-coil region spans residues 16 to 50 (LDRRRWLMAQQQQELQQKEQELKNHQEEEQQSEEK). Residues 23 to 168 (MAQQQQELQQ…LKSTNYIQQW (146 aa)) form a disordered region. The span at 31 to 52 (QQKEQELKNHQEEEQQSEEKLQ) shows a compositional bias: basic and acidic residues. Residues 70 to 82 (SQEQPQPSQQQPS) show a composition bias toward low complexity. 2 stretches are compositionally biased toward pro residues: residues 83–94 (VQPPSQPPPQPS) and 104–117 (GPQPPQPQPPPQPT). Polar residues-rich tracts occupy residues 124–138 (RCTQHTSKCNLQDSQ) and 145–168 (PCQSSPIRNTGYSQLKSTNYIQQW).

The protein is Coiled-coil domain-containing protein 200 of Homo sapiens (Human).